We begin with the raw amino-acid sequence, 555 residues long: Phosphomethylpyrimidine synthase (555 aa).

Substrate-binding positions include Asn-191, Met-220, Tyr-249, His-285, 305–307 (SRG), 346–349 (DGLR), and Glu-385. His-389 serves as a coordination point for Zn(2+). Tyr-412 contributes to the substrate binding site. His-453 contacts Zn(2+). Residues Cys-533, Cys-536, and Cys-541 each contribute to the [4Fe-4S] cluster site.

The protein belongs to the ThiC family. In terms of assembly, homodimer. The cofactor is [4Fe-4S] cluster.

It carries out the reaction 5-amino-1-(5-phospho-beta-D-ribosyl)imidazole + S-adenosyl-L-methionine = 4-amino-2-methyl-5-(phosphooxymethyl)pyrimidine + CO + 5'-deoxyadenosine + formate + L-methionine + 3 H(+). Its pathway is cofactor biosynthesis; thiamine diphosphate biosynthesis. In terms of biological role, catalyzes the synthesis of the hydroxymethylpyrimidine phosphate (HMP-P) moiety of thiamine from aminoimidazole ribotide (AIR) in a radical S-adenosyl-L-methionine (SAM)-dependent reaction. The sequence is that of Phosphomethylpyrimidine synthase from Ehrlichia ruminantium (strain Gardel).